The sequence spans 686 residues: Pentatricopeptide repeat-containing protein At4g08210 (686 aa).

PPR repeat units lie at residues 4 to 38 (DLKL…GISQ), 39 to 69 (NVFI…MSER), 70 to 104 (NIVT…EEEA), 106 to 140 (NEFM…NLRG), 141 to 171 (DVVL…ILRP), 172 to 206 (SSTS…NVVS), 207 to 236 (WNCL…GLVL), 237 to 271 (DGFA…GLES), 272 to 302 (SPFA…EKLA), 306 to 340 (SVAV…DLCF), 341 to 375 (DSYT…GYEL), 376 to 406 (DYIV…LPNK), 407 to 441 (DIIA…GLDA), 442 to 476 (DQFI…GYES), 477 to 507 (EPVT…MLER), 508 to 542 (DVVS…GIEP), 543 to 573 (NKVT…MKSE), and 579 to 609 (YLEH…MPLE). The tract at residues 614-686 (IWTSLLTACG…AKESGMSWII (73 aa)) is type E motif; degenerate.

This sequence belongs to the PPR family. PCMP-E subfamily.

This is Pentatricopeptide repeat-containing protein At4g08210 (PCMP-E100) from Arabidopsis thaliana (Mouse-ear cress).